A 431-amino-acid chain; its full sequence is Trigger factor (431 aa).

The region spanning 158 to 243 (GYLVALETWS…VIEVSEPVLL (86 aa)) is the PPIase FKBP-type domain.

Belongs to the FKBP-type PPIase family. Tig subfamily.

The protein resides in the cytoplasm. It carries out the reaction [protein]-peptidylproline (omega=180) = [protein]-peptidylproline (omega=0). Its function is as follows. Involved in protein export. Acts as a chaperone by maintaining the newly synthesized protein in an open conformation. Functions as a peptidyl-prolyl cis-trans isomerase. This Xylella fastidiosa (strain M23) protein is Trigger factor.